A 109-amino-acid polypeptide reads, in one-letter code: Mitochondrial pyruvate carrier 2 (109 aa).

3 consecutive transmembrane segments (helical) span residues 19-35 (IHFW…IANI), 51-67 (IAVT…STII), and 74-90 (LFSV…YQLT).

Belongs to the mitochondrial pyruvate carrier (MPC) (TC 2.A.105) family.

The protein localises to the mitochondrion inner membrane. Mediates the uptake of pyruvate into mitochondria. The chain is Mitochondrial pyruvate carrier 2 from Arabidopsis thaliana (Mouse-ear cress).